The sequence spans 248 residues: Adenosylcobinamide-GDP ribazoletransferase (248 aa).

A run of 6 helical transmembrane segments spans residues 36–56, 59–79, 114–134, 137–157, 170–190, and 199–219; these read FFLP…YLGL, FLPA…ITGG, GTIA…SLVL, YSIA…FLCL, IFIG…VLVL, and ATII…LLCL.

The protein belongs to the CobS family. Mg(2+) is required as a cofactor.

It is found in the cell membrane. The catalysed reaction is alpha-ribazole + adenosylcob(III)inamide-GDP = adenosylcob(III)alamin + GMP + H(+). The enzyme catalyses alpha-ribazole 5'-phosphate + adenosylcob(III)inamide-GDP = adenosylcob(III)alamin 5'-phosphate + GMP + H(+). Its pathway is cofactor biosynthesis; adenosylcobalamin biosynthesis; adenosylcobalamin from cob(II)yrinate a,c-diamide: step 7/7. In terms of biological role, joins adenosylcobinamide-GDP and alpha-ribazole to generate adenosylcobalamin (Ado-cobalamin). Also synthesizes adenosylcobalamin 5'-phosphate from adenosylcobinamide-GDP and alpha-ribazole 5'-phosphate. This chain is Adenosylcobinamide-GDP ribazoletransferase, found in Clostridium botulinum (strain Langeland / NCTC 10281 / Type F).